The following is a 414-amino-acid chain: uncharacterized protein (414 aa).

The signal sequence occupies residues 1-20; that stretch reads MKKLLAIGILCIMVTAVMSG. A lipid anchor (S-archaeol cysteine) is attached at Cys-21. The Fe/B12 periplasmic-binding domain occupies 119–389; that stretch reads RVIVMSSTEI…DLATILHPEA (271 aa).

It is found in the cell membrane. This is an uncharacterized protein from Methanocaldococcus jannaschii (strain ATCC 43067 / DSM 2661 / JAL-1 / JCM 10045 / NBRC 100440) (Methanococcus jannaschii).